Reading from the N-terminus, the 145-residue chain is Thioredoxin C-3 (145 aa).

Heme is bound by residues C25, C28, and H29. The Thioredoxin domain maps to 29-140 (HQALLPLEPI…LQQWLDQQLQ (112 aa)). Residues C65 and C68 are joined by a disulfide bond.

This sequence belongs to the thioredoxin family.

Its function is as follows. Participates in various redox reactions through the reversible oxidation of its active center dithiol to a disulfide and catalyzes dithiol-disulfide exchange reactions. This chain is Thioredoxin C-3, found in Corynebacterium nephridii.